Here is a 256-residue protein sequence, read N- to C-terminus: UPF0246 protein Sbal_1048 (256 aa).

This sequence belongs to the UPF0246 family.

The protein is UPF0246 protein Sbal_1048 of Shewanella baltica (strain OS155 / ATCC BAA-1091).